The following is a 402-amino-acid chain: Elongation factor Tu (402 aa).

A tr-type G domain is found at 16–211 (KEHINIGTIG…AVDSYIDSPV (196 aa)). A G1 region spans residues 25 to 32 (GHVDHGKT). 25-32 (GHVDHGKT) lines the GTP pocket. T32 serves as a coordination point for Mg(2+). Residues 66–70 (GITIN) form a G2 region. Positions 87–90 (DCPG) are G3. Residues 87-91 (DCPGH) and 142-145 (NKID) contribute to the GTP site. The interval 142-145 (NKID) is G4. The G5 stretch occupies residues 181–183 (SAR).

This sequence belongs to the TRAFAC class translation factor GTPase superfamily. Classic translation factor GTPase family. EF-Tu/EF-1A subfamily. Monomer.

The protein localises to the cytoplasm. The catalysed reaction is GTP + H2O = GDP + phosphate + H(+). Its function is as follows. GTP hydrolase that promotes the GTP-dependent binding of aminoacyl-tRNA to the A-site of ribosomes during protein biosynthesis. The sequence is that of Elongation factor Tu from Mesomycoplasma hyopneumoniae (strain J / ATCC 25934 / NCTC 10110) (Mycoplasma hyopneumoniae).